A 527-amino-acid polypeptide reads, in one-letter code: Phosphoenolpyruvate carboxykinase (ATP) (527 aa).

Arg55, Tyr191, and Lys197 together coordinate substrate. ATP contacts are provided by residues Lys197, His216, and Gly232–Thr240. Residues Lys197 and His216 each coordinate Mn(2+). Asp253 contributes to the Mn(2+) binding site. ATP contacts are provided by Glu281, Arg318, and Thr443. Position 318 (Arg318) interacts with substrate.

This sequence belongs to the phosphoenolpyruvate carboxykinase (ATP) family. It depends on Mn(2+) as a cofactor.

Its subcellular location is the cytoplasm. The enzyme catalyses oxaloacetate + ATP = phosphoenolpyruvate + ADP + CO2. It functions in the pathway carbohydrate biosynthesis; gluconeogenesis. In terms of biological role, involved in the gluconeogenesis. Catalyzes the conversion of oxaloacetate (OAA) to phosphoenolpyruvate (PEP) through direct phosphoryl transfer between the nucleoside triphosphate and OAA. The sequence is that of Phosphoenolpyruvate carboxykinase (ATP) from Brevibacillus brevis (strain 47 / JCM 6285 / NBRC 100599).